Consider the following 74-residue polypeptide: Large ribosomal subunit protein bL31 (74 aa).

Zn(2+) contacts are provided by Cys16, Cys18, Cys38, and Cys41.

It belongs to the bacterial ribosomal protein bL31 family. Type A subfamily. Part of the 50S ribosomal subunit. Zn(2+) is required as a cofactor.

Its function is as follows. Binds the 23S rRNA. The protein is Large ribosomal subunit protein bL31 of Acinetobacter baylyi (strain ATCC 33305 / BD413 / ADP1).